The primary structure comprises 538 residues: Chaperonin GroEL 1 (538 aa).

ATP-binding positions include 29 to 32, 86 to 90, G413, 478 to 480, and D494; these read TLGP, DGTTT, and NAA.

Belongs to the chaperonin (HSP60) family. As to quaternary structure, forms a cylinder of 14 subunits composed of two heptameric rings stacked back-to-back. Interacts with the co-chaperonin GroES.

It is found in the cytoplasm. It catalyses the reaction ATP + H2O + a folded polypeptide = ADP + phosphate + an unfolded polypeptide.. Functionally, together with its co-chaperonin GroES, plays an essential role in assisting protein folding. The GroEL-GroES system forms a nano-cage that allows encapsulation of the non-native substrate proteins and provides a physical environment optimized to promote and accelerate protein folding. This Corynebacterium glutamicum (strain ATCC 13032 / DSM 20300 / JCM 1318 / BCRC 11384 / CCUG 27702 / LMG 3730 / NBRC 12168 / NCIMB 10025 / NRRL B-2784 / 534) protein is Chaperonin GroEL 1.